A 234-amino-acid polypeptide reads, in one-letter code: Coiled-coil domain-containing protein 194 (234 aa).

A signal peptide spans 1–43; that stretch reads MAEPGPEPGRAWRLLALCGAAVFLAAAAAGGALVAWNLAASTA. Residues 44–63 form a disordered region; the sequence is RSPRCPEPEQMNATVRPPDS. Positions 67–171 form a coiled coil; it reads VEELRRRLAE…LQRAGAAEAA (105 aa). The tract at residues 194 to 234 is disordered; sequence GTLRKESRLRPRSGSRTKPSISHRPKSGSTKGCRRPPRDPQ. Positions 203-219 are enriched in basic residues; the sequence is RPRSGSRTKPSISHRPK.

The sequence is that of Coiled-coil domain-containing protein 194 from Mus musculus (Mouse).